The primary structure comprises 174 residues: MTTIVSVRRNNQVVIAGDGQVSLGNTVMKGNARKVRRLYHNKVLAGFAGGTADAFTLFERFEAKLEMHQGHLMKAAVEMAKDWRSDKMLRKLEALLAVADDTCSLIITGNGDVVQPENDLISIGSGGNFAQSAATALLENTELSALEIAEKSLTIAGDICVFTNQFKTIEELNY.

Residue threonine 2 is part of the active site. Positions 157, 160, and 163 each coordinate Na(+).

It belongs to the peptidase T1B family. HslV subfamily. In terms of assembly, a double ring-shaped homohexamer of HslV is capped on each side by a ring-shaped HslU homohexamer. The assembly of the HslU/HslV complex is dependent on binding of ATP.

It is found in the cytoplasm. The catalysed reaction is ATP-dependent cleavage of peptide bonds with broad specificity.. Its activity is regulated as follows. Allosterically activated by HslU binding. Its function is as follows. Protease subunit of a proteasome-like degradation complex believed to be a general protein degrading machinery. The protein is ATP-dependent protease subunit HslV of Shewanella sediminis (strain HAW-EB3).